We begin with the raw amino-acid sequence, 215 residues long: ER lumen protein-retaining receptor A (215 aa).

Topologically, residues 1 to 2 (MN) are lumenal. The helical transmembrane segment at 3–21 (IFRFAGDMSHLISVLILLL) threads the bilayer. The Cytoplasmic segment spans residues 22 to 35 (KIYATKSCAGISLK). A helical transmembrane segment spans residues 36–53 (TQELYALVFLTRYLDLFT). Topologically, residues 54-61 (DYVSLYNS) are lumenal. Residues 62–82 (IMKIVFIASSLAIVWCMRRHP) traverse the membrane as a helical segment. The Cytoplasmic portion of the chain corresponds to 83–98 (LVRRSYDKDLDTFRHQ). A helical membrane pass occupies residues 99-112 (YVVLACFVLGLILN). At 113–119 (EKFTVQE) the chain is on the lumenal side. A helical transmembrane segment spans residues 120–139 (VFWAFSIYLEAVAILPQLVL). The Cytoplasmic portion of the chain corresponds to 140 to 151 (LQRSGNVDNLTG). Residues 152-170 (QYVVFLGAYRGLYIINWIY) traverse the membrane as a helical segment. Residues 171–181 (RYFTEDHFTRW) are Lumenal-facing. The chain crosses the membrane as a helical span at residues 182–202 (IACVSGLVQTALYADFFYYYY). Residues 203–215 (ISWKTNTKLKLPA) are Cytoplasmic-facing.

Belongs to the ERD2 family.

The protein localises to the endoplasmic reticulum membrane. In terms of biological role, required for the retention of luminal endoplasmic reticulum proteins. Determines the specificity of the luminal ER protein retention system. Also required for normal vesicular traffic through the Golgi. This receptor recognizes H-D-E-L. This chain is ER lumen protein-retaining receptor A (ERD2A), found in Arabidopsis thaliana (Mouse-ear cress).